A 200-amino-acid polypeptide reads, in one-letter code: Cytochrome c biogenesis ATP-binding export protein CcmA (200 aa).

An ABC transporter domain is found at 2–200 (LDVIELDFDY…NKADYEEYHL (199 aa)). Residue 34-41 (GSNGAGKT) participates in ATP binding.

The protein belongs to the ABC transporter superfamily. CcmA exporter (TC 3.A.1.107) family. In terms of assembly, the complex is composed of two ATP-binding proteins (CcmA) and two transmembrane proteins (CcmB).

The protein localises to the cell inner membrane. The catalysed reaction is heme b(in) + ATP + H2O = heme b(out) + ADP + phosphate + H(+). Functionally, part of the ABC transporter complex CcmAB involved in the biogenesis of c-type cytochromes; once thought to export heme, this seems not to be the case, but its exact role is uncertain. Responsible for energy coupling to the transport system. In Legionella pneumophila (strain Paris), this protein is Cytochrome c biogenesis ATP-binding export protein CcmA.